Consider the following 256-residue polypeptide: Cytochrome c-type biogenesis protein CcmE homolog, mitochondrial (256 aa).

A mitochondrion-targeting transit peptide spans 1 to 57; sequence MAARLLFRRSSQILRSIQRNPQISSSFESPPCPIFHSLTTASPDPSRLSSLTFLRSL. The helical transmembrane segment at 84-106 threads the bilayer; sequence LWTYALTFSCIAGFVVIVLNQFQ. 2 residues coordinate heme: H222 and Y226.

The protein belongs to the CcmE/CycJ family.

The protein resides in the mitochondrion inner membrane. Its subcellular location is the mitochondrion intermembrane space. Heme-binding chaperone that may be involved in cytochrome c maturation in mitochondria. The sequence is that of Cytochrome c-type biogenesis protein CcmE homolog, mitochondrial from Arabidopsis thaliana (Mouse-ear cress).